Here is a 362-residue protein sequence, read N- to C-terminus: MKKSLELKLQQMLERYEEVGRLLSEASIIADQNQFKSLSKEYAQLEPVSQCYESYLEAKNNLDSLNELLESDDKDLATMAEEEIDTVKKQIEELDEQLQWHLIPKDPDDERNIYLEVRAGTGGDEAAIFAGDLFRMYSRYAESQGWQIELISASHGEHGGYKEIIAKISGQAVYSQLKFESGAHRVQRVPETESQGRVHTSACTVAIMPEVDEINDIQINPDDLRIDTYRSSGAGGQHVNKTDSAIRITHIPTGVVVECQDERSQHKNRAKAMSLLKTRLLDAEVSKQKQEQAQTRKSLVGTGDRSERIRTYNFPQGRLTDHRINLTIYQLSDIMEGNLSLVIDPLKREYHAELLADLGRHD.

Q237 carries the N5-methylglutamine modification.

It belongs to the prokaryotic/mitochondrial release factor family. Methylated by PrmC. Methylation increases the termination efficiency of RF1.

It localises to the cytoplasm. Functionally, peptide chain release factor 1 directs the termination of translation in response to the peptide chain termination codons UAG and UAA. This is Peptide chain release factor 1 from Legionella pneumophila (strain Paris).